The sequence spans 423 residues: Steroid hormone receptor ERR1 (423 aa).

The interval 1 to 67 is disordered; that stretch reads MSSQVVGIEP…GAGPGEQGGG (67 aa). The tract at residues 1 to 76 is repressor domain; it reads MSSQVVGIEP…GKLVLSSLPK (76 aa). A Glycyl lysine isopeptide (Lys-Gly) (interchain with G-Cter in SUMO) cross-link involves residue Lys14. A phosphoserine mark is found at Ser19 and Ser22. Over residues 58-67 the composition is skewed to gly residues; that stretch reads GAGPGEQGGG. The nuclear receptor DNA-binding region spans 76–151; the sequence is KRLCLVCGDV…VGMLKEGVRL (76 aa). 2 NR C4-type zinc fingers span residues 79-99 and 115-134; these read CLVC…CEAC and CPAS…CQAC. Lys129, Lys138, Lys160, and Lys162 each carry N6-acetyllysine; by PCAF/KAT2B. Lys189 is covalently cross-linked (Glycyl lysine isopeptide (Lys-Gly) (interchain with G-Cter in SUMO2)). Residues 193–421 enclose the NR LBD domain; the sequence is PVNALVSHLL…KLFLEMLEAM (229 aa). A Glycyl lysine isopeptide (Lys-Gly) (interchain with G-Cter in SUMO); alternate cross-link involves residue Lys403. Lys403 is covalently cross-linked (Glycyl lysine isopeptide (Lys-Gly) (interchain with G-Cter in SUMO2); alternate). Residues 403–423 are AF-2 domain; sequence KLEGKVPMHKLFLEMLEAMMD.

It belongs to the nuclear hormone receptor family. NR3 subfamily. As to quaternary structure, binds DNA as a monomer or a homodimer. Interacts (via the AF2 domain) with coactivator PPARGC1A (via the L3 motif); the interaction greatly enhances transcriptional activity of genes involved in energy metabolism. Interacts with PIAS4; the interaction enhances sumoylation. Interacts with MAPK15; promotes re-localization of ESRRA to the cytoplasm through a XPO1-dependent mechanism then inhibits ESRRA transcriptional activity. In terms of processing, phosphorylation on Ser-19 enhances sumoylation on Lys-14 increasing repression of transcriptional activity. Sumoylated with SUMO2. Main site is Lys-14 which is enhanced by phosphorylation on Ser-19, cofactor activation, and by interaction with PIAS4. Sumoylation enhances repression of transcriptional activity, but has no effect on subcellular location nor on DNA binding. Post-translationally, reversibly acetylated. Acetylation by PCAF/KAT2 at Lys-129, Lys-138, Lys-160 and Lys-162 and PCAF/KAT2 decreases transcriptional activity probably by inhibiting DNA-binding activity; deacetylation involves SIRT1 and HDAC8 and increases DNA-binding.

The protein resides in the nucleus. It localises to the cytoplasm. Functionally, binds to an ERR-alpha response element (ERRE) containing a single consensus half-site, 5'-TNAAGGTCA-3'. Can bind to the medium-chain acyl coenzyme A dehydrogenase (MCAD) response element NRRE-1 and may act as an important regulator of MCAD promoter. Binds to the C1 region of the lactoferrin gene promoter. Requires dimerization and the coactivator, PGC-1A, for full activity. The ERRalpha/PGC1alpha complex is a regulator of energy metabolism. Induces the expression of PERM1 in the skeletal muscle. The polypeptide is Steroid hormone receptor ERR1 (ESRRA) (Homo sapiens (Human)).